A 190-amino-acid chain; its full sequence is dCTP deaminase (190 aa).

113-118 (KSTYAR) is a binding site for dCTP. E139 acts as the Proton donor/acceptor in catalysis. DCTP-binding residues include Q158, Y172, K181, and Q182.

The protein belongs to the dCTP deaminase family. Homotrimer.

It carries out the reaction dCTP + H2O + H(+) = dUTP + NH4(+). It participates in pyrimidine metabolism; dUMP biosynthesis; dUMP from dCTP (dUTP route): step 1/2. Functionally, catalyzes the deamination of dCTP to dUTP. This chain is dCTP deaminase, found in Chlamydia muridarum (strain MoPn / Nigg).